The primary structure comprises 198 residues: Integrator complex subunit 8-like protein (198 aa).

Belongs to the Integrator subunit 8 family. In terms of assembly, component of the Integrator complex. The core complex associates with protein phosphatase 2A subunits, to form the Integrator-PP2A (INTAC) complex.

The protein resides in the nucleus. It is found in the chromosome. Functionally, component of the integrator complex, a multiprotein complex that terminates RNA polymerase II (Pol II) transcription in the promoter-proximal region of genes. The integrator complex provides a quality checkpoint during transcription elongation by driving premature transcription termination of transcripts that are unfavorably configured for transcriptional elongation: the complex terminates transcription by (1) catalyzing dephosphorylation of the C-terminal domain (CTD) of Pol II subunit polr2a, (2) degrading the exiting nascent RNA transcript via endonuclease activity and (3) promoting the release of Pol II from bound DNA. The integrator complex is also involved in terminating the synthesis of non-coding Pol II transcripts, such as enhancer RNAs (eRNAs), small nuclear RNAs (snRNAs), telomerase RNAs and long non-coding RNAs (lncRNAs). Within the integrator complex, INTS8 is required for the recruitment of protein phosphatase 2A (PP2A) to transcription pause-release checkpoint. The protein is Integrator complex subunit 8-like protein of Dictyostelium discoideum (Social amoeba).